The primary structure comprises 179 residues: Large ribosomal subunit protein uL6 (179 aa).

Residues 154–169 (EPYKGKGVKYEHEQIR) show a composition bias toward basic and acidic residues. Positions 154 to 179 (EPYKGKGVKYEHEQIRRKAGKSGGKK) are disordered. Positions 170–179 (RKAGKSGGKK) are enriched in basic residues.

Belongs to the universal ribosomal protein uL6 family. As to quaternary structure, part of the 50S ribosomal subunit.

Functionally, this protein binds to the 23S rRNA, and is important in its secondary structure. It is located near the subunit interface in the base of the L7/L12 stalk, and near the tRNA binding site of the peptidyltransferase center. In Oleidesulfovibrio alaskensis (strain ATCC BAA-1058 / DSM 17464 / G20) (Desulfovibrio alaskensis), this protein is Large ribosomal subunit protein uL6.